We begin with the raw amino-acid sequence, 241 residues long: Uridylate kinase (241 aa).

ATP is bound at residue 11 to 14 (KFSG). Positions 19–24 (GENGFG) are involved in allosteric activation by GTP. Residue Gly53 coordinates UMP. The ATP site is built by Gly54 and Arg58. UMP-binding positions include Asp74 and 135–142 (TGNPFFTT). Thr162, Tyr168, and Asp171 together coordinate ATP.

Belongs to the UMP kinase family. Homohexamer.

Its subcellular location is the cytoplasm. The catalysed reaction is UMP + ATP = UDP + ADP. Its pathway is pyrimidine metabolism; CTP biosynthesis via de novo pathway; UDP from UMP (UMPK route): step 1/1. Its activity is regulated as follows. Allosterically activated by GTP. Inhibited by UTP. Its function is as follows. Catalyzes the reversible phosphorylation of UMP to UDP. This chain is Uridylate kinase, found in Wolinella succinogenes (strain ATCC 29543 / DSM 1740 / CCUG 13145 / JCM 31913 / LMG 7466 / NCTC 11488 / FDC 602W) (Vibrio succinogenes).